The chain runs to 502 residues: UDP-N-acetylmuramate--L-alanine ligase (502 aa).

Position 119 to 125 (119 to 125) interacts with ATP; sequence GSHGKST.

Belongs to the MurCDEF family.

The protein localises to the cytoplasm. The catalysed reaction is UDP-N-acetyl-alpha-D-muramate + L-alanine + ATP = UDP-N-acetyl-alpha-D-muramoyl-L-alanine + ADP + phosphate + H(+). Its pathway is cell wall biogenesis; peptidoglycan biosynthesis. In terms of biological role, cell wall formation. This chain is UDP-N-acetylmuramate--L-alanine ligase, found in Frankia casuarinae (strain DSM 45818 / CECT 9043 / HFP020203 / CcI3).